The following is a 294-amino-acid chain: Probable 3-hydroxyisobutyrate dehydrogenase (294 aa).

NAD(+) is bound by residues 3–31 (TIAFLGLGNMGAPMSANLVGAGHVVRGFD) and T93. The active site involves K168. Residue K243 participates in NAD(+) binding.

It belongs to the HIBADH-related family.

The enzyme catalyses 3-hydroxy-2-methylpropanoate + NAD(+) = 2-methyl-3-oxopropanoate + NADH + H(+). It participates in amino-acid degradation; L-valine degradation. The protein is Probable 3-hydroxyisobutyrate dehydrogenase (mmsB) of Mycobacterium bovis (strain ATCC BAA-935 / AF2122/97).